We begin with the raw amino-acid sequence, 1912 residues long: Protein javelin (1912 aa).

Disordered regions lie at residues 1–32, 89–145, 298–377, 460–515, 545–586, 764–920, 965–1010, 1257–1297, 1486–1507, and 1881–1912; these read MGNG…QHNY, GTGL…VGGA, RSRH…HRLS, QSRR…SLSE, TTRT…TLRQ, SYNQ…EAPV, IQEN…GKPL, GINS…GGAA, EQQE…QYED, and YDPS…DDKM. Composition is skewed to basic residues over residues 97 to 133 and 299 to 313; these read QQLH…HPHA and SRHK…KKPP. Residues 339 to 354 show a composition bias toward polar residues; that stretch reads ADDTQSQRSNSATCDS. Residues 355–374 are compositionally biased toward low complexity; sequence HQQQQQQQHQPQQQHQQQQH. The span at 489-498 shows a compositional bias: polar residues; the sequence is EHSQSSVFPE. The segment covering 499 to 512 has biased composition (low complexity); it reads TTTSNSDDQTDSPS. Residues 553 to 566 show a composition bias toward acidic residues; that stretch reads SEEGEEEQTGEEVV. The segment covering 568–586 has biased composition (polar residues); the sequence is SLTTPTEPQTSDSESTLRQ. 2 stretches are compositionally biased toward basic and acidic residues: residues 772 to 792 and 802 to 869; these read QRKE…DSIR and RQRE…RKEE. Residues 890–904 show a composition bias toward acidic residues; it reads SQQEDTVADVEEEDN. A compositionally biased stretch (basic and acidic residues) spans 965-979; sequence IQENKETSQRIEPKP. The span at 981-990 shows a compositional bias: low complexity; the sequence is PKTNSNSSST. Composition is skewed to acidic residues over residues 1494–1507 and 1903–1912; these read LEEE…QYED and ELYDSLDDKM.

The protein resides in the cytoplasm. Its subcellular location is the cytoskeleton. Its function is as follows. Important for normal assembly of actin bundles during bristle formation. This chain is Protein javelin, found in Drosophila melanogaster (Fruit fly).